The primary structure comprises 122 residues: Large ribosomal subunit protein uL14 (122 aa).

Belongs to the universal ribosomal protein uL14 family. Part of the 50S ribosomal subunit. Forms a cluster with proteins L3 and L19. In the 70S ribosome, L14 and L19 interact and together make contacts with the 16S rRNA in bridges B5 and B8.

Binds to 23S rRNA. Forms part of two intersubunit bridges in the 70S ribosome. In Saccharopolyspora erythraea (strain ATCC 11635 / DSM 40517 / JCM 4748 / NBRC 13426 / NCIMB 8594 / NRRL 2338), this protein is Large ribosomal subunit protein uL14.